Reading from the N-terminus, the 325-residue chain is NADH-quinone oxidoreductase subunit H (325 aa).

8 consecutive transmembrane segments (helical) span residues 11-31 (ILIS…CGAF), 81-101 (AIFT…FAIV), 114-134 (IGIL…LFAG), 154-174 (LSYE…AGSF), 186-206 (VWNV…GVAV), 237-257 (FFVG…TLFF), 265-285 (LPPF…FILI), and 304-324 (VCLP…LYNA).

The protein belongs to the complex I subunit 1 family. In terms of assembly, NDH-1 is composed of 13 different subunits. Subunits NuoA, H, J, K, L, M, N constitute the membrane sector of the complex.

It is found in the cell inner membrane. The enzyme catalyses a quinone + NADH + 5 H(+)(in) = a quinol + NAD(+) + 4 H(+)(out). Functionally, NDH-1 shuttles electrons from NADH, via FMN and iron-sulfur (Fe-S) centers, to quinones in the respiratory chain. The immediate electron acceptor for the enzyme in this species is believed to be ubiquinone. Couples the redox reaction to proton translocation (for every two electrons transferred, four hydrogen ions are translocated across the cytoplasmic membrane), and thus conserves the redox energy in a proton gradient. This subunit may bind ubiquinone. In Yersinia pseudotuberculosis serotype O:1b (strain IP 31758), this protein is NADH-quinone oxidoreductase subunit H.